Reading from the N-terminus, the 76-residue chain is Omega-conotoxin-like TxO5 (76 aa).

A signal peptide spans 1-22; that stretch reads MKLTCMVIVAVLFLTAWTFVTA. The propeptide occupies 23–50; that stretch reads ITSNGLENLFPNAHHEMKNPEASKLNKR. Cystine bridges form between Cys-51/Cys-66, Cys-58/Cys-70, and Cys-65/Cys-75.

Belongs to the conotoxin O1 superfamily. Expressed by the venom duct.

The protein resides in the secreted. In terms of biological role, omega-conotoxins act at presynaptic membranes, they bind and block voltage-gated calcium channels (Cav). This Conus textile (Cloth-of-gold cone) protein is Omega-conotoxin-like TxO5 (TXO5).